The chain runs to 446 residues: Corrinoid/iron-sulfur protein large subunit (446 aa).

The 58-residue stretch at 2 to 59 (PLTGLEIYKQLPKKNCGECGTPTCLAFAMNLASGKASLDSCPYVSDAAREALDAAAAP) folds into the 4Fe-4S domain. [4Fe-4S] cluster is bound by residues C17, C20, C25, and C42. Residues T340, T346, 370–373 (GLSV), and A433 contribute to the 5-methoxybenzimidazolylcob(I)amide site.

Heterohexamer composed of 2 subunits of AcsC, 2 subunits of AcsD and 2 subunits of AcsE. It depends on [4Fe-4S] cluster as a cofactor.

Its function is as follows. Acts as a methyl group carrier in the anaerobic acetyl-CoA pathway (Wood-Ljungdahl pathway) of carbon monoxide and carbon dioxide fixation. Binds the corrinoid 5-methoxybenzimidazolylcobamide which is then methylated by the AcsE subunit. The polypeptide is Corrinoid/iron-sulfur protein large subunit (acsC) (Moorella thermoacetica (Clostridium thermoaceticum)).